Here is a 30-residue protein sequence, read N- to C-terminus: QGCPRILKQCKQDSECPGECICMAHGFCTI.

Intrachain disulfides connect Cys3–Cys20, Cys10–Cys22, and Cys16–Cys28.

This sequence belongs to the protease inhibitor I7 (squash-type serine protease inhibitor) family.

The protein localises to the secreted. Functionally, inhibits trypsin; probably participates in a plant defense mechanism. This is Trypsin inhibitor 4 from Momordica charantia (Bitter gourd).